A 106-amino-acid polypeptide reads, in one-letter code: Oncosphere antigen B (106 aa).

A Fibronectin type-III domain is found at L11–K106.

The protein is Oncosphere antigen B (ONCB) of Hydatigena taeniaeformis (Feline tapeworm).